The primary structure comprises 27 residues: Equinin A (27 aa).

A compositionally biased stretch (basic and acidic residues) spans 1–13; it reads AVDKGGGKAEKKD. The tract at residues 1–27 is disordered; that stretch reads AVDKGGGKAEKKDGNRKKKLAGGEGGG.

The protein localises to the secreted. Functionally, peptide with unknown function. Does not show antimicrobial and hemolytic activities. The polypeptide is Equinin A (Actinia equina (Beadlet anemone)).